The primary structure comprises 771 residues: GPI mannosyltransferase 3 (771 aa).

The interval 1–47 is disordered; that stretch reads MSSSRRRKSFTSSSSSSSPSFHSPPPTSRLRPRSPPSSNTKTSPTST. Composition is skewed to low complexity over residues 10–21 and 36–47; these read FTSSSSSSSPSF and PSSNTKTSPTST. The next 7 helical transmembrane spans lie at 49-69, 251-271, 285-305, 341-361, 378-398, 410-430, and 441-461; these read PLAT…AFTV, LSLA…WMGL, AILV…SCVV, YVSQ…LVGL, SLVQ…LSLV, LPSL…PAVI, and LTLI…TIYH. A disordered region spans residues 575–594; it reads SYLSAQPRPQHPSTTSTNDA.

This sequence belongs to the glycosyltransferase 22 family. PIGB subfamily.

Its subcellular location is the endoplasmic reticulum membrane. It participates in glycolipid biosynthesis; glycosylphosphatidylinositol-anchor biosynthesis. Mannosyltransferase involved in glycosylphosphatidylinositol-anchor biosynthesis. Transfers the third mannose to Man2-GlcN-acyl-PI during GPI precursor assembly. This Aspergillus fumigatus (strain ATCC MYA-4609 / CBS 101355 / FGSC A1100 / Af293) (Neosartorya fumigata) protein is GPI mannosyltransferase 3 (gpi10).